A 183-amino-acid polypeptide reads, in one-letter code: Oligoribonuclease (183 aa).

The Exonuclease domain occupies 8-171 (LIWLDMEMTG…ADIRESIAEL (164 aa)). Tyr129 is an active-site residue.

Belongs to the oligoribonuclease family.

The protein localises to the cytoplasm. In terms of biological role, 3'-to-5' exoribonuclease specific for small oligoribonucleotides. The protein is Oligoribonuclease of Aromatoleum aromaticum (strain DSM 19018 / LMG 30748 / EbN1) (Azoarcus sp. (strain EbN1)).